Here is a 545-residue protein sequence, read N- to C-terminus: Lysine--tRNA ligase (545 aa).

Positions 42–50 match the 'HIGH' region motif; that stretch reads PSGVPHIGH. The 'KMSKS' region signature appears at 307–311; the sequence is PLSSS.

It belongs to the class-I aminoacyl-tRNA synthetase family.

The protein localises to the cytoplasm. The catalysed reaction is tRNA(Lys) + L-lysine + ATP = L-lysyl-tRNA(Lys) + AMP + diphosphate. In Haloarcula marismortui (strain ATCC 43049 / DSM 3752 / JCM 8966 / VKM B-1809) (Halobacterium marismortui), this protein is Lysine--tRNA ligase.